Here is a 481-residue protein sequence, read N- to C-terminus: Glutamyl-tRNA(Gln) amidotransferase subunit A (481 aa).

Active-site charge relay system residues include Lys-76 and Ser-151. Ser-175 acts as the Acyl-ester intermediate in catalysis.

The protein belongs to the amidase family. GatA subfamily. As to quaternary structure, heterotrimer of A, B and C subunits.

The catalysed reaction is L-glutamyl-tRNA(Gln) + L-glutamine + ATP + H2O = L-glutaminyl-tRNA(Gln) + L-glutamate + ADP + phosphate + H(+). Its function is as follows. Allows the formation of correctly charged Gln-tRNA(Gln) through the transamidation of misacylated Glu-tRNA(Gln) in organisms which lack glutaminyl-tRNA synthetase. The reaction takes place in the presence of glutamine and ATP through an activated gamma-phospho-Glu-tRNA(Gln). The chain is Glutamyl-tRNA(Gln) amidotransferase subunit A from Chlorobaculum tepidum (strain ATCC 49652 / DSM 12025 / NBRC 103806 / TLS) (Chlorobium tepidum).